A 638-amino-acid polypeptide reads, in one-letter code: Chaperone protein DnaK (638 aa).

Thr-198 is modified (phosphothreonine; by autocatalysis). Disordered regions lie at residues 539 to 559 (DGLAHSTKKQVEEAGDALASD) and 602 to 638 (QAKAQGEAEGQAHDAGQEKPADDVVDAEFEEVKDDKK). Positions 611 to 623 (GQAHDAGQEKPAD) are enriched in basic and acidic residues. The span at 624–638 (DVVDAEFEEVKDDKK) shows a compositional bias: acidic residues.

The protein belongs to the heat shock protein 70 family.

Functionally, acts as a chaperone. This chain is Chaperone protein DnaK, found in Shewanella frigidimarina (strain NCIMB 400).